The sequence spans 449 residues: Glutamyl-tRNA reductase (449 aa).

Residues 58–61 (TCNR), Ser121, 126–128 (ETQ), and Gln132 each bind substrate. The active-site Nucleophile is Cys59. 203–208 (GLGEMA) is a binding site for NADP(+).

It belongs to the glutamyl-tRNA reductase family. As to quaternary structure, homodimer.

The enzyme catalyses (S)-4-amino-5-oxopentanoate + tRNA(Glu) + NADP(+) = L-glutamyl-tRNA(Glu) + NADPH + H(+). The protein operates within porphyrin-containing compound metabolism; protoporphyrin-IX biosynthesis; 5-aminolevulinate from L-glutamyl-tRNA(Glu): step 1/2. In terms of biological role, catalyzes the NADPH-dependent reduction of glutamyl-tRNA(Glu) to glutamate 1-semialdehyde (GSA). The protein is Glutamyl-tRNA reductase of Helicobacter pylori (strain J99 / ATCC 700824) (Campylobacter pylori J99).